The following is a 58-amino-acid chain: Ribosome biogenesis protein Nop10 (58 aa).

This sequence belongs to the NOP10 family.

Involved in ribosome biogenesis; more specifically in 18S rRNA pseudouridylation and in cleavage of pre-rRNA. In Thermococcus onnurineus (strain NA1), this protein is Ribosome biogenesis protein Nop10.